A 98-amino-acid polypeptide reads, in one-letter code: NADH-ubiquinone oxidoreductase chain 4L (98 aa).

Helical transmembrane passes span 2–22, 26–46, and 61–81; these read TLVM…TLMF, LMST…MAVI, and IIIL…LAMV.

Belongs to the complex I subunit 4L family. In terms of assembly, core subunit of respiratory chain NADH dehydrogenase (Complex I) which is composed of 45 different subunits.

It is found in the mitochondrion inner membrane. The catalysed reaction is a ubiquinone + NADH + 5 H(+)(in) = a ubiquinol + NAD(+) + 4 H(+)(out). Core subunit of the mitochondrial membrane respiratory chain NADH dehydrogenase (Complex I) which catalyzes electron transfer from NADH through the respiratory chain, using ubiquinone as an electron acceptor. Part of the enzyme membrane arm which is embedded in the lipid bilayer and involved in proton translocation. This chain is NADH-ubiquinone oxidoreductase chain 4L (MT-ND4L), found in Nyctomys sumichrasti (Sumichrast's vesper rat).